A 148-amino-acid polypeptide reads, in one-letter code: SLKGDDIIKGLYDLWKITKPNTLLLSIGLIFSLIGTSFSLYIPLIIRNALNKSSLSTDKIVIIIICFGLTLIFSGVSTYILGYIGQKIIQNIRSVTWNKVIKLPYSFHLKNSASNLTSRLVNDTMNITRVFSVEFIFSYSITNIFIYN.

The region spanning 25 to 148 (LSIGLIFSLI…YSITNIFIYN (124 aa)) is the ABC transmembrane type-1 domain. Helical transmembrane passes span 26–46 (SIGL…PLII), 60–80 (IVII…STYI), and 127–147 (ITRV…IFIY).

The protein localises to the cell membrane. This is an uncharacterized protein from Staphylococcus epidermidis.